The chain runs to 139 residues: Short neuropeptide F (139 aa).

The propeptide occupies 1–23 (MGRARRTVRAPAQHDALGGHALA). Residues 1–48 (MGRARRTVRAPAQHDALGGHALARKSVRSPSRRLRFGRRSDPDMPPQA) are disordered. Residues 22–37 (LARKSVRSPSRRLRFG) show a composition bias toward basic residues. Position 36 is a phenylalanine amide (Phe36). Positions 40-62 (SDPDMPPQAPLDEMNELLSLREV) are excised as a propeptide. A Phenylalanine amide modification is found at Phe70. The propeptide occupies 74–96 (SEERAVPHIFPQEFLTQEQDRAV). Position 105 is a phenylalanine amide (Phe105). A propeptide spanning residues 109–139 (SDNNMFLLPYESALPQEVKANGSVEDDRQQE) is cleaved from the precursor.

It belongs to the NPY family. In terms of tissue distribution, sNPF peptide 1: Expressed in corpora cardiaca (CC), corpora allata (CA), antennal lobe (AL) and gnathal ganglion (GNG) (at protein level). Expression in AL detected in all animals, in GNG in most animals, expression in CC and CA in some animals (at protein level). sNPF peptide 2: Expressed in corpora cardiaca (CC), corpora allata (CA), antennal lobe (AL) and gnathal ganglion (GNG) (at protein level). Expression in AL detected in all animals, in GNG, CC and CA in most animals (at protein level). sNPF peptide 3: Expressed in corpora cardiaca (CC), corpora allata (CA), antennal lobe (AL) and gnathal ganglion (GNG) (at protein level). Expression detected in all animals (at protein level).

Its subcellular location is the secreted. In terms of biological role, plays a role in controlling food intake and regulating body size. This Agrotis ipsilon (Black cutworm moth) protein is Short neuropeptide F.